A 262-amino-acid chain; its full sequence is Polyamine aminopropyltransferase (262 aa).

The PABS domain maps to 1–249 (MWITQEITPY…DIHRAAFALP (249 aa)). An S-methyl-5'-thioadenosine-binding site is contributed by Asn29. A spermidine-binding site is contributed by Asp83. Catalysis depends on Asp155, which acts as the Proton acceptor.

Homodimer.

The protein localises to the cytoplasm. The catalysed reaction is S-adenosyl 3-(methylsulfanyl)propylamine + putrescine = S-methyl-5'-thioadenosine + spermidine + H(+). It functions in the pathway amine and polyamine biosynthesis; spermidine biosynthesis; spermidine from putrescine: step 1/1. Its activity is regulated as follows. Inhibited by methylglyoxal bis(cyclopentylamidinohydrazone)(MGBCP). Involved in the cell growth and proliferation. Catalyzes the irreversible transfer of a propylamine group from the amino donor S-adenosylmethioninamine (decarboxy-AdoMet) to putrescine (1,4-diaminobutane) to yield spermidine. Spermidine cannot be used as an aminopropyl acceptor. This is Polyamine aminopropyltransferase from Helicobacter pylori (strain ATCC 700392 / 26695) (Campylobacter pylori).